A 436-amino-acid chain; its full sequence is Glutamyl-tRNA reductase (436 aa).

Substrate-binding positions include 49–52, Ser118, 123–125, and Gln129; these read TCNR and EPQ. The active-site Nucleophile is Cys50. 203-208 lines the NADP(+) pocket; sequence GAGETI.

Belongs to the glutamyl-tRNA reductase family. In terms of assembly, homodimer.

The catalysed reaction is (S)-4-amino-5-oxopentanoate + tRNA(Glu) + NADP(+) = L-glutamyl-tRNA(Glu) + NADPH + H(+). It functions in the pathway porphyrin-containing compound metabolism; protoporphyrin-IX biosynthesis; 5-aminolevulinate from L-glutamyl-tRNA(Glu): step 1/2. In terms of biological role, catalyzes the NADPH-dependent reduction of glutamyl-tRNA(Glu) to glutamate 1-semialdehyde (GSA). The chain is Glutamyl-tRNA reductase from Actinobacillus pleuropneumoniae serotype 7 (strain AP76).